Reading from the N-terminus, the 313-residue chain is UDP-N-acetylglucosamine 3-dehydrogenase (313 aa).

NAD(+) is bound by residues His-13, Leu-14, and Arg-38.

This sequence belongs to the Gfo/Idh/MocA family. Exists in multiple oligomeric states.

It catalyses the reaction UDP-N-acetyl-alpha-D-glucosamine + NAD(+) = UDP-2-acetamido-3-dehydro-2-deoxy-alpha-D-glucopyranose + NADH + H(+). It functions in the pathway bacterial outer membrane biogenesis; LPS lipid A biosynthesis. In terms of biological role, oxidoreductase involved in the synthesis of 2,3-diamino-2,3-dideoxy-D-glucopyranose (GlcN3N), which is a component of lipid A in some species. Catalyzes the NAD(+)-dependent oxidation of the glucosamine 3-position of UDP-N-acetyl-glucosamine (UDP-GlcNAc) to a ketone moiety, forming UDP-2-acetamido-3-dehydro-2-deoxy-alpha-D-glucopyranose (UDP-3-oxo-GlcNAc). Is specific for UDP-GlcNAc, no activity is observed with UDP-glucose (UDP-Glc), UDP-glucoronic acid (UDP-GlcA), UDP-galactose (UDP-Gal) and UDP-N-acetylgalactosamine (UDP-GalNAc). Cannot use FAD(+) and NADP(+). The protein is UDP-N-acetylglucosamine 3-dehydrogenase of Acidithiobacillus ferrooxidans (strain ATCC 23270 / DSM 14882 / CIP 104768 / NCIMB 8455) (Ferrobacillus ferrooxidans (strain ATCC 23270)).